The chain runs to 150 residues: 3-dehydroquinate dehydratase (150 aa).

Tyr26 serves as the catalytic Proton acceptor. Asn77, His83, and Asp90 together coordinate substrate. The active-site Proton donor is the His103. Residues 104–105 and Arg114 contribute to the substrate site; that span reads LS.

It belongs to the type-II 3-dehydroquinase family. Homododecamer.

It carries out the reaction 3-dehydroquinate = 3-dehydroshikimate + H2O. It participates in metabolic intermediate biosynthesis; chorismate biosynthesis; chorismate from D-erythrose 4-phosphate and phosphoenolpyruvate: step 3/7. In terms of biological role, catalyzes a trans-dehydration via an enolate intermediate. This is 3-dehydroquinate dehydratase from Yersinia pseudotuberculosis serotype O:1b (strain IP 31758).